Reading from the N-terminus, the 90-residue chain is Small ribosomal subunit protein uS15 (90 aa).

It belongs to the universal ribosomal protein uS15 family. As to quaternary structure, part of the 30S ribosomal subunit. Forms a bridge to the 50S subunit in the 70S ribosome, contacting the 23S rRNA.

Functionally, one of the primary rRNA binding proteins, it binds directly to 16S rRNA where it helps nucleate assembly of the platform of the 30S subunit by binding and bridging several RNA helices of the 16S rRNA. Its function is as follows. Forms an intersubunit bridge (bridge B4) with the 23S rRNA of the 50S subunit in the ribosome. In Wolbachia sp. subsp. Drosophila simulans (strain wRi), this protein is Small ribosomal subunit protein uS15.